A 328-amino-acid chain; its full sequence is ATP-dependent 6-phosphofructokinase (328 aa).

Gly11 is a binding site for ATP. 21–25 (RAAVR) serves as a coordination point for ADP. ATP-binding positions include 72–73 (RS) and 102–105 (GNGT). Residue Asn103 coordinates Mg(2+). 126-128 (TID) lines the substrate pocket. The active-site Proton acceptor is Asp128. Arg155 provides a ligand contact to ADP. Substrate contacts are provided by residues Arg163 and 170 to 172 (MGR). ADP contacts are provided by residues 186-188 (GAE) and 214-216 (KAS). Residues Glu223, Arg247, and 253–256 (HVQR) each bind substrate.

This sequence belongs to the phosphofructokinase type A (PFKA) family. ATP-dependent PFK group I subfamily. Prokaryotic clade 'B1' sub-subfamily. As to quaternary structure, homotetramer. It depends on Mg(2+) as a cofactor.

It localises to the cytoplasm. The catalysed reaction is beta-D-fructose 6-phosphate + ATP = beta-D-fructose 1,6-bisphosphate + ADP + H(+). The protein operates within carbohydrate degradation; glycolysis; D-glyceraldehyde 3-phosphate and glycerone phosphate from D-glucose: step 3/4. Its activity is regulated as follows. Allosterically activated by ADP and other diphosphonucleosides, and allosterically inhibited by phosphoenolpyruvate. Its function is as follows. Catalyzes the phosphorylation of D-fructose 6-phosphate to fructose 1,6-bisphosphate by ATP, the first committing step of glycolysis. The sequence is that of ATP-dependent 6-phosphofructokinase from Cytophaga hutchinsonii (strain ATCC 33406 / DSM 1761 / CIP 103989 / NBRC 15051 / NCIMB 9469 / D465).